The sequence spans 101 residues: Putative pterin-4-alpha-carbinolamine dehydratase (101 aa).

It belongs to the pterin-4-alpha-carbinolamine dehydratase family.

The catalysed reaction is (4aS,6R)-4a-hydroxy-L-erythro-5,6,7,8-tetrahydrobiopterin = (6R)-L-erythro-6,7-dihydrobiopterin + H2O. The sequence is that of Putative pterin-4-alpha-carbinolamine dehydratase from Rhizobium johnstonii (strain DSM 114642 / LMG 32736 / 3841) (Rhizobium leguminosarum bv. viciae).